A 125-amino-acid polypeptide reads, in one-letter code: Large ribosomal subunit protein bL12 (125 aa).

It belongs to the bacterial ribosomal protein bL12 family. As to quaternary structure, homodimer. Part of the ribosomal stalk of the 50S ribosomal subunit. Forms a multimeric L10(L12)X complex, where L10 forms an elongated spine to which 2 to 4 L12 dimers bind in a sequential fashion. Binds GTP-bound translation factors.

Forms part of the ribosomal stalk which helps the ribosome interact with GTP-bound translation factors. Is thus essential for accurate translation. The polypeptide is Large ribosomal subunit protein bL12 (Helicobacter acinonychis (strain Sheeba)).